We begin with the raw amino-acid sequence, 615 residues long: Alpha-fetoprotein (615 aa).

The signal sequence occupies residues 1–15 (MAVLPLSGAIRLSRG). The Cell attachment site signature appears at 14–16 (RGD). Albumin domains are found at residues 27–218 (WAKK…RRQA), 223–415 (KPIR…ELKK), and 416–609 (HIYE…VLVT). 2 disulfide bridges follow: Cys109–Cys121 and Cys120–Cys131. Asn137 and Asn157 each carry an N-linked (GlcNAc...) asparagine glycan. Intrachain disulfides connect Cys155–Cys200, Cys199–Cys213, Cys236–Cys282, Cys281–Cys289, Cys301–Cys315, Cys314–Cys325, Cys396–Cys405, Cys428–Cys458, and Cys457–Cys468. Positions 283–285 (RGD) match the Cell attachment site motif. A glycan (N-linked (GlcNAc...) asparagine) is linked at Asn472. Cystine bridges form between Cys485–Cys501, Cys500–Cys511, Cys538–Cys593, and Cys592–Cys601.

It belongs to the ALB/AFP/VDB family. As to quaternary structure, dimeric and trimeric forms have been found in addition to the monomeric form. In terms of processing, sulfated.

The protein localises to the secreted. In terms of biological role, binds copper, nickel, and fatty acids as well as, and bilirubin less well than, serum albumin. In Gallus gallus (Chicken), this protein is Alpha-fetoprotein (AFP).